Reading from the N-terminus, the 141-residue chain is Endoribonuclease YbeY (141 aa).

Zn(2+)-binding residues include His-105, His-109, and Asp-115.

This sequence belongs to the endoribonuclease YbeY family. Requires Zn(2+) as cofactor.

It localises to the cytoplasm. Functionally, single strand-specific metallo-endoribonuclease involved in late-stage 70S ribosome quality control and in maturation of the 3' terminus of the 16S rRNA. This is Endoribonuclease YbeY from Chloroherpeton thalassium (strain ATCC 35110 / GB-78).